Consider the following 594-residue polypeptide: Arginine--tRNA ligase (594 aa).

The short motif at 139–149 (ANPTGPLHVGH) is the 'HIGH' region element.

The protein belongs to the class-I aminoacyl-tRNA synthetase family. In terms of assembly, monomer.

It localises to the cytoplasm. The catalysed reaction is tRNA(Arg) + L-arginine + ATP = L-arginyl-tRNA(Arg) + AMP + diphosphate. The chain is Arginine--tRNA ligase from Paraburkholderia phymatum (strain DSM 17167 / CIP 108236 / LMG 21445 / STM815) (Burkholderia phymatum).